Reading from the N-terminus, the 468-residue chain is GTPase Der (468 aa).

EngA-type G domains follow at residues 3-167 (PTLV…PYAE) and 179-352 (PVIA…TAAM). Residues 9-16 (GRPNVGKS), 56-60 (DTGGF), 119-122 (NKAE), 185-192 (GRPNVGKS), 232-236 (DTAGL), and 297-300 (NKWD) contribute to the GTP site. The region spanning 353–437 (AHIPTPKLTR…PLRVEFRTGH (85 aa)) is the KH-like domain. The tract at residues 434–468 (RTGHNPYAGKKAPPLTEEEARRAHSRRRRNRKKYG) is disordered. Positions 456-468 (AHSRRRRNRKKYG) are enriched in basic residues.

This sequence belongs to the TRAFAC class TrmE-Era-EngA-EngB-Septin-like GTPase superfamily. EngA (Der) GTPase family. Associates with the 50S ribosomal subunit.

GTPase that plays an essential role in the late steps of ribosome biogenesis. The polypeptide is GTPase Der (Nitrosomonas eutropha (strain DSM 101675 / C91 / Nm57)).